A 361-amino-acid polypeptide reads, in one-letter code: L-threonine 3-dehydrogenase (361 aa).

Zn(2+) is bound at residue cysteine 38. Residues threonine 40 and histidine 43 each act as charge relay system in the active site. Zn(2+)-binding residues include histidine 63, glutamate 64, cysteine 93, cysteine 96, cysteine 99, and cysteine 107. Residues isoleucine 175, aspartate 195, arginine 200, 262-264 (LGI), and 286-287 (IY) contribute to the NAD(+) site.

Belongs to the zinc-containing alcohol dehydrogenase family. Homotetramer. Zn(2+) is required as a cofactor.

Its subcellular location is the cytoplasm. It catalyses the reaction L-threonine + NAD(+) = (2S)-2-amino-3-oxobutanoate + NADH + H(+). It participates in amino-acid degradation; L-threonine degradation via oxydo-reductase pathway; glycine from L-threonine: step 1/2. Its function is as follows. Catalyzes the NAD(+)-dependent oxidation of L-threonine to 2-amino-3-ketobutyrate. The protein is L-threonine 3-dehydrogenase of Pectobacterium atrosepticum (strain SCRI 1043 / ATCC BAA-672) (Erwinia carotovora subsp. atroseptica).